The chain runs to 469 residues: Regulator of G-protein signaling 7 (469 aa).

The region spanning 37 to 112 (EKNGIPIRTV…DDGTFYRFQT (76 aa)) is the DEP domain. S229 and S241 each carry phosphoserine. Positions 236–255 (DIRSHSPTHTPTPETKPPTE) are disordered. A Phosphothreonine modification is found at T243. The 62-residue stretch at 255–316 (EDELHQQIKY…LSDDTTFWEL (62 aa)) folds into the G protein gamma domain. The RGS domain maps to 333–448 (GMDEALKDPV…IRSSAYQELL (116 aa)). S434 is subject to Phosphoserine.

As to quaternary structure, interacts with GNB5, forming the RGS7-GNB5 complex. Interacts with GPR158; promotes the GTPase activator activity of the RGS7-GNB5 complex in absence of glycine, in contrast GTPase activator activity of the RGS7-GNB5 complex is inhibited in presence of glycine. Interacts with GPR179. Interacts with PKD1; this prevents rapid proteasomal degradation. Interacts with RGS7BP, leading to regulate the subcellular location of the heterodimer formed with GNB5. Interacts (phosphorylated form) with 14-3-3 protein YWHAQ. Interacts with SNAPIN. Interacts with GNAI1. Interacts with GNAO1, GNAI3 and GNAZ. Palmitoylated. In terms of processing, ubiquitinated, leading to rapid proteasomal degradation. Post-translationally, phosphorylation and subsequent interaction with 14-3-3 proteins inhibits GAP activity. As to expression, detected in brain (at protein level).

It localises to the cytoplasm. The protein resides in the cytosol. The protein localises to the cell membrane. It is found in the membrane. GTPase activator component of the RGS7-GNB5 complex that regulates G protein-coupled receptor signaling cascades. The RGS7-GNB5 complex acts as an inhibitor signal transduction by promoting the GTPase activity of G protein alpha subunits, such as GNAO1, thereby driving them into their inactive GDP-bound form. May play a role in synaptic vesicle exocytosis. Glycine-dependent regulation of the RGS7-GNB5 complex by GPR158 affects mood and cognition via its ability to regulate neuronal excitability in L2/L3 pyramidal neurons of the prefrontal cortex. Modulates the activity of potassium channels that are activated by GNAO1 in response to muscarinic acetylcholine receptor M2/CHRM2 signaling. This chain is Regulator of G-protein signaling 7 (Rgs7), found in Mus musculus (Mouse).